Reading from the N-terminus, the 449-residue chain is Trigger factor (449 aa).

The region spanning 162–242 is the PPIase FKBP-type domain; the sequence is GDFVTIDMTV…VRAVREKQVP (81 aa). A disordered region spans residues 428 to 449; sequence APVNLEGGSTPAAEAEPAVSEA. The segment covering 438–449 has biased composition (low complexity); the sequence is PAAEAEPAVSEA.

This sequence belongs to the FKBP-type PPIase family. Tig subfamily.

It is found in the cytoplasm. It catalyses the reaction [protein]-peptidylproline (omega=180) = [protein]-peptidylproline (omega=0). In terms of biological role, involved in protein export. Acts as a chaperone by maintaining the newly synthesized protein in an open conformation. Functions as a peptidyl-prolyl cis-trans isomerase. This is Trigger factor from Acidothermus cellulolyticus (strain ATCC 43068 / DSM 8971 / 11B).